A 142-amino-acid chain; its full sequence is Negative cofactor 2 complex subunit alpha (142 aa).

Polar residues predominate over residues 1–11 (MADQVPVTTQL). The interval 1–43 (MADQVPVTTQLPPIKPEHEVPLDAGGSPVGNMGTNSNNNNELG) is disordered. Ser-27 is subject to Phosphoserine. Residues 29–137 (VGNMGTNSNN…LCVEEGQTQP (109 aa)) form the Histone-fold domain. Phosphoserine is present on Ser-141.

This sequence belongs to the NC2 alpha/DRAP1 family. In terms of assembly, component of the NC2 (negative cofactor 2) complex composed of BUR6 and NCB2. The NC2 complex associates with SPT15/TBP. Interacts with SPT15/TBP.

It is found in the nucleus. In terms of biological role, component of the NC2 complex which represses RNA polymerase II transcription through binding to SPT15/TBP and thereby inhibiting the assembly of the preinitiation complex. The NC2 complex may also mediate transcriptional activation from TATA-driven promoters through association with SPT15/TBP. In Saccharomyces cerevisiae (strain ATCC 204508 / S288c) (Baker's yeast), this protein is Negative cofactor 2 complex subunit alpha (BUR6).